Consider the following 492-residue polypeptide: Virion host shutoff protein (492 aa).

4 disordered regions span residues 110–130 (EEASDVDASPPPSPITDSRPS), 143–165 (FAPGDRGTRAAGPGPAAPSGAPS), 288–307 (SQARRAARRERANSRSLESM), and 334–369 (EDDYEEDPPLQPPDVAGGPRDGARSSSSEILTPPEL). Low complexity predominate over residues 144 to 165 (APGDRGTRAAGPGPAAPSGAPS).

Belongs to the herpesviridae VHS protein family. Interacts with human EIF4H, EIF4A1 and EIF4A2; interaction with eIF4AI and EIF4A2 presumably allows Vhs protein to associate with the eIF4F cap-binding complex.

It localises to the virion. Functionally, minor structural protein that acts as an endoribonuclease during lytic infection. Degrades host mRNAs in the cytoplasm by cutting them at preferred sites, including some in regions of translation initiation. Together with inhibition of host splicing by ICP27, contributes to an overall decrease in host protein synthesis. Also, after the onset of viral transcription, accelerates the turnover of viral mRNA, thereby facilitating the sequential expression of different classes of viral genes. Binds translation initiation factors eIF4H, eIF4AI, and eIF4AII, thereby may interact directly with the translation initiation complex and thus digest specifically mRNAs. Also impedes antigen presentation by major histocompatibility complex class I and class II molecules, inhibits secretion of cytokines that would otherwise recruit lymphocytes and neutrophils cells to the site of infection and blocks the activation of dendritic cells. Impedes the alpha/beta interferon-mediated response to infection. Inhibits the integrated stress response (ISR) in the infected cell, this function requires the endonuclease activity. Stress granule formation is thus inhibited, which allows protein synthesis and viral replication. The protein is Virion host shutoff protein (UL41) of Human herpesvirus 2 (strain G) (HHV-2).